The following is a 469-amino-acid chain: Tubulin gamma-2 chain (469 aa).

142–148 (AGGTGSG) is a GTP binding site.

It belongs to the tubulin family.

The protein resides in the cytoplasm. It is found in the cytoskeleton. The protein localises to the microtubule organizing center. Functionally, tubulin is the major constituent of microtubules. The gamma chain is found at microtubule organizing centers (MTOC) such as the spindle poles, suggesting that it is involved in the minus-end nucleation of microtubule assembly. The protein is Tubulin gamma-2 chain (TUBG2) of Zea mays (Maize).